We begin with the raw amino-acid sequence, 143 residues long: Hemoglobin subunit alpha-1 (143 aa).

An N-acetylserine modification is found at S2. The Globin domain occupies 2-143 (SLSSKDKATV…RALALAEKYR (142 aa)). H60 serves as a coordination point for O2. H89 is a binding site for heme b.

It belongs to the globin family. Hb 1 is a heterotetramer of two alpha-1 and two beta-1 chains. Hb 3 is a heterotetramer of two alpha-1 and two beta-2 chains. Red blood cells.

Its function is as follows. Involved in oxygen transport from gills to the various peripheral tissues. This is Hemoglobin subunit alpha-1 (hba1) from Gadus morhua (Atlantic cod).